The following is an 87-amino-acid chain: U3-theraphotoxin-Hhn1m (87 aa).

Positions 1–24 are cleaved as a signal peptide; it reads MVNMKASMFLTFAGLVLLFVVCYA. Positions 25 to 52 are excised as a propeptide; that stretch reads SESEEKEFPKEMLSSIFAVDNDFKQEER. 3 disulfides stabilise this stretch: Cys54/Cys67, Cys61/Cys72, and Cys66/Cys79.

The protein belongs to the neurotoxin 10 (Hwtx-1) family. 51 (Hntx-8) subfamily. Hntx-8 sub-subfamily. In terms of tissue distribution, expressed by the venom gland.

The protein resides in the secreted. In terms of biological role, ion channel inhibitor. This chain is U3-theraphotoxin-Hhn1m, found in Cyriopagopus hainanus (Chinese bird spider).